Consider the following 225-residue polypeptide: MLKQAGNQSFRPFISFAQKSLFNRQITGNHWIFARFKFYPLNKIVNYNHFHSSSCQSEAKNFYKQFEGDISDPPPKGPFDIDLGALKSSYLRKMKTLHPDVAQGKDAALAQRDSAELSKAYNTLKAPLTRAEYILQLQGINPVSEDISNSDPEFLMEIMDVHENISASRDSPEKLLQLSQENQGRKVQEINEIRKAMESSNWDSALLYVNRLRYWNTIDKILHDL.

The N-terminal 49 residues, 1 to 49 (MLKQAGNQSFRPFISFAQKSLFNRQITGNHWIFARFKFYPLNKIVNYNH), are a transit peptide targeting the mitochondrion. Residues 61 to 137 (NFYKQFEGDI…LTRAEYILQL (77 aa)) form the J domain. The HSP70 binding motif lies at 98-100 (HPD).

Belongs to the HscB family. As to quaternary structure, interacts with ssc1.

The protein resides in the mitochondrion matrix. In terms of biological role, co-chaperone required for the assembly of iron-sulfur (Fe/S) clusters in mitochondria. Stimulates the ATPase activity of the mitochondrial Hsp70 chaperone ssc1, to mediate the transfer of iron-sulfur clusters from isu1 to grx5. The protein is J-type co-chaperone jac1, mitochondrial of Schizosaccharomyces pombe (strain 972 / ATCC 24843) (Fission yeast).